A 423-amino-acid chain; its full sequence is COP9 signalosome complex subunit 3 (423 aa).

Position 2 is an N-acetylalanine (Ala-2). The PCI domain occupies 197–365 (NFERALYFYE…GMVSFHDNPE (169 aa)). The disordered stretch occupies residues 402–423 (QFVQKSMGSQEDDSGNKPSSYS). Phosphoserine occurs at positions 407, 410, and 423.

The protein belongs to the CSN3 family. Component of the CSN complex, composed of COPS1/GPS1, COPS2, COPS3, COPS4, COPS5, COPS6, COPS7 (COPS7A or COPS7B), COPS8 and COPS9. In the complex, it probably interacts directly with COPS1, COPS4, COPS8 and COPS9. Interacts with CK2 and PKD. Interacts with the translation initiation factor EIF3S6 and IKBKG. Interacts with ERCC6.

The protein localises to the cytoplasm. It is found in the nucleus. Functionally, component of the COP9 signalosome complex (CSN), a complex involved in various cellular and developmental processes. The CSN complex is an essential regulator of the ubiquitin (Ubl) conjugation pathway by mediating the deneddylation of the cullin subunits of SCF-type E3 ligase complexes, leading to decrease the Ubl ligase activity of SCF-type complexes such as SCF, CSA or DDB2. The complex is also involved in phosphorylation of p53/TP53, c-jun/JUN, IkappaBalpha/NFKBIA, ITPK1 and IRF8/ICSBP, possibly via its association with CK2 and PKD kinases. CSN-dependent phosphorylation of TP53 and JUN promotes and protects degradation by the Ubl system, respectively. Essential to maintain the survival of epiblast cells and thus the development of the postimplantation embryo. The chain is COP9 signalosome complex subunit 3 (Cops3) from Rattus norvegicus (Rat).